A 509-amino-acid chain; its full sequence is Glutamyl-tRNA(Gln) amidotransferase subunit A (509 aa).

Residues Lys-75 and Ser-150 each act as charge relay system in the active site. Ser-174 serves as the catalytic Acyl-ester intermediate. The interval 471–509 (DWHKRRPPLGQPPLEQAQGTAQQPKAKSKSTKGSKKSKS) is disordered. The segment covering 496-509 (AKSKSTKGSKKSKS) has biased composition (basic residues).

Belongs to the amidase family. GatA subfamily. Heterotrimer of A, B and C subunits.

The enzyme catalyses L-glutamyl-tRNA(Gln) + L-glutamine + ATP + H2O = L-glutaminyl-tRNA(Gln) + L-glutamate + ADP + phosphate + H(+). In terms of biological role, allows the formation of correctly charged Gln-tRNA(Gln) through the transamidation of misacylated Glu-tRNA(Gln) in organisms which lack glutaminyl-tRNA synthetase. The reaction takes place in the presence of glutamine and ATP through an activated gamma-phospho-Glu-tRNA(Gln). In Synechococcus sp. (strain JA-3-3Ab) (Cyanobacteria bacterium Yellowstone A-Prime), this protein is Glutamyl-tRNA(Gln) amidotransferase subunit A.